The sequence spans 206 residues: MNLSMKQKQEGAQENVKNSPVPRRTLKMIQPSADGSLVGRENELPKGLFKRKLWDDQLASQTSSCGPEANENKDVGDLTQEAFDLISKENPSSQYWKEVAEQRRKALYEALKENEKLHKEIEQKDSEIARLRKENKDLAEVAEHVQYMAEVIERLSNEPLDNFESPDSQEFDSEEEAVEYSELEDSGAGTCAEETVSSSTDARPCT.

Residues 1–18 (MNLSMKQKQEGAQENVKN) show a composition bias toward polar residues. Residues 1–42 (MNLSMKQKQEGAQENVKNSPVPRRTLKMIQPSADGSLVGREN) form a disordered region. Lys-27 bears the N6-acetyllysine mark. Residues Ser-36, Ser-63, and Ser-64 each carry the phosphoserine modification. The tract at residues 79 to 158 (TQEAFDLISK…AEVIERLSNE (80 aa)) is necessary and sufficient for interaction with IDAS and CDT1. A coiled-coil region spans residues 91-141 (PSSQYWKEVAEQRRKALYEALKENEKLHKEIEQKDSEIARLRKENKDLAEV). Residues 157-206 (NEPLDNFESPDSQEFDSEEEAVEYSELEDSGAGTCAEETVSSSTDARPCT) are disordered. Residues 167 to 185 (DSQEFDSEEEAVEYSELED) show a composition bias toward acidic residues. Positions 167 to 187 (DSQEFDSEEEAVEYSELEDSG) are homeodomain binding. Ser-181 carries the phosphoserine; by CK2 modification. The span at 195–206 (TVSSSTDARPCT) shows a compositional bias: polar residues.

The protein belongs to the geminin family. As to quaternary structure, homotetramer. Interacts with CDT1; this inhibits binding of the MCM complex to origins of replication. The complex with CDT1 exists in two forms, a 'permissive' heterotrimer and an 'inhibitory' heterohexamer. Interacts (via coiled-coil domain) with IDAS (via coiled-coil domain); this targets GMNN to the nucleus. The heterodimer formed by GMNN and MCIDAS has much lower affinity for CDT1 than the GMNN homodimer. Interacts with a subset of Hox proteins, affinity increasing from anterior to posterior types, the strongest interaction being with HOXB1, HOXC9 and HOXD10. Interacts with LRWD1 from G1/S to mitosis. In terms of processing, phosphorylated during mitosis. Phosphorylation at Ser-181 by CK2 results in enhanced binding to Hox proteins and more potent inhibitory effect on Hox transcriptional activity.

It localises to the cytoplasm. The protein localises to the nucleus. Inhibits DNA replication by preventing the incorporation of MCM complex into pre-replication complex (pre-RC). It is degraded during the mitotic phase of the cell cycle. Its destruction at the metaphase-anaphase transition permits replication in the succeeding cell cycle. Inhibits histone acetyltransferase activity of KAT7/HBO1 in a CDT1-dependent manner, inhibiting histone H4 acetylation and DNA replication licensing. Inhibits the transcriptional activity of a subset of Hox proteins, enrolling them in cell proliferative control. This Mus musculus (Mouse) protein is Geminin (Gmnn).